Here is a 294-residue protein sequence, read N- to C-terminus: uncharacterized protein (294 aa).

Positions 1–32 are disordered; that stretch reads MSHLKDPTTQYYTGEYPKQKQPTPGIQAKMTP. Lys-39 is subject to N6-acetyllysine. An NADP(+)-binding site is contributed by 53–77; sequence LVTGGDSGIGRAAAIAYAREGADVA. Ser-186 contacts substrate. Catalysis depends on Tyr-199, which acts as the Proton acceptor.

The protein belongs to the short-chain dehydrogenases/reductases (SDR) family.

This is an uncharacterized protein from Escherichia coli (strain K12).